The sequence spans 524 residues: Cytochrome P450 4F1 (524 aa).

The helical transmembrane segment at 15 to 35 (VAFPWQTLLLFGASWILAQIL) threads the bilayer. The heme site is built by Glu-328 and Cys-468.

This sequence belongs to the cytochrome P450 family. Requires heme as cofactor. Expressed in liver.

The protein resides in the endoplasmic reticulum membrane. It is found in the microsome membrane. It carries out the reaction (5Z,8Z,11Z,14Z)-eicosatetraenoate + reduced [NADPH--hemoprotein reductase] + O2 = 20-hydroxy-(5Z,8Z,11Z,14Z)-eicosatetraenoate + oxidized [NADPH--hemoprotein reductase] + H2O + H(+). It catalyses the reaction 5-hydroxy-(6E,8Z,11Z,14Z)-eicosatetraenoate + reduced [NADPH--hemoprotein reductase] + O2 = 5,20-dihydroxy-(6E,8Z,11Z,14Z)-eicosatetraenoate + oxidized [NADPH--hemoprotein reductase] + H2O + H(+). The catalysed reaction is 8-hydroxy-(5Z,9E,11Z,14Z)-eicosatetraenoate + reduced [NADPH--hemoprotein reductase] + O2 = 8,20-dihydroxy-(5Z,9E,11Z,14Z)-eicosatetraenoate + oxidized [NADPH--hemoprotein reductase] + H2O + H(+). The enzyme catalyses leukotriene B4 + reduced [NADPH--hemoprotein reductase] + O2 = 20-hydroxy-leukotriene B4 + oxidized [NADPH--hemoprotein reductase] + H2O + H(+). It carries out the reaction 6-trans-leukotriene B4 + reduced [NADPH--hemoprotein reductase] + O2 = 20-hydroxy-6-trans-leukotriene B4 + oxidized [NADPH--hemoprotein reductase] + H2O + H(+). It catalyses the reaction lipoxin A4 + reduced [NADPH--hemoprotein reductase] + O2 = 20-hydroxy-lipoxin A4 + oxidized [NADPH--hemoprotein reductase] + H2O + H(+). Functionally, a cytochrome P450 monooxygenase involved in the metabolism of arachidonic acid and its oxygenated derivatives. Mechanistically, uses molecular oxygen inserting one oxygen atom into a substrate, and reducing the second into a water molecule, with two electrons provided by NADPH via cytochrome P450 reductase (CPR; NADPH-ferrihemoprotein reductase). Participates in the conversion of arachidonic acid to omega-hydroxyeicosatetraenoic acid (20-HETE), a signaling molecule acting both as vasoconstrictive and natriuretic with overall effect on arterial blood pressure. May play a role in the oxidative inactivation of eicosanoids, including both pro-inflammatory and anti-inflammatory mediators such as leukotriene B4 (LTB4), lipoxin A4 (LXA4), and several HETEs. The sequence is that of Cytochrome P450 4F1 from Rattus norvegicus (Rat).